The primary structure comprises 247 residues: ATP synthase subunit a, chloroplastic (247 aa).

Transmembrane regions (helical) follow at residues 38 to 58 (QVLI…ILVV), 95 to 115 (VPFI…GALL), 134 to 154 (INTT…AGIS), 199 to 219 (LVVV…VMFL), and 220 to 240 (GLFT…AYIG).

The protein belongs to the ATPase A chain family. In terms of assembly, F-type ATPases have 2 components, CF(1) - the catalytic core - and CF(0) - the membrane proton channel. CF(1) has five subunits: alpha(3), beta(3), gamma(1), delta(1), epsilon(1). CF(0) has four main subunits: a, b, b' and c.

The protein resides in the plastid. It localises to the chloroplast thylakoid membrane. Functionally, key component of the proton channel; it plays a direct role in the translocation of protons across the membrane. This is ATP synthase subunit a, chloroplastic from Pisum sativum (Garden pea).